We begin with the raw amino-acid sequence, 920 residues long: Protein translocase subunit SecA 2 (920 aa).

ATP is bound by residues glutamine 91, 109–113, and aspartate 527; that span reads GEGKT. Over residues 859–870 the composition is skewed to basic and acidic residues; the sequence is GEGSALDRRPTD. A disordered region spans residues 859–920; it reads GEGSALDRRP…KSRNRRRRKR (62 aa). The segment covering 906 to 920 has biased composition (basic residues); sequence PHRPGKSRNRRRRKR.

The protein belongs to the SecA family. As to quaternary structure, monomer and homodimer. Part of the essential Sec protein translocation apparatus which comprises SecA, SecYEG and auxiliary proteins SecDF. Other proteins may also be involved.

Its subcellular location is the cell membrane. It is found in the cytoplasm. It carries out the reaction ATP + H2O + cellular proteinSide 1 = ADP + phosphate + cellular proteinSide 2.. Its function is as follows. Part of the Sec protein translocase complex. Interacts with the SecYEG preprotein conducting channel. Has a central role in coupling the hydrolysis of ATP to the transfer of proteins into and across the cell membrane, serving as an ATP-driven molecular motor driving the stepwise translocation of polypeptide chains across the membrane. This chain is Protein translocase subunit SecA 2, found in Streptomyces avermitilis (strain ATCC 31267 / DSM 46492 / JCM 5070 / NBRC 14893 / NCIMB 12804 / NRRL 8165 / MA-4680).